The chain runs to 543 residues: MAKLVAFHEESRRSLERGINALADAVKITLGPKGRNVVLEKKYGAPQIVNDGVTIAKEIELEDAYENTGAQLMREVAAKTNDVVGDGTTTATVLAQALIREGLKNVAAGTNPIALKRGMEKAIKTIVDGIAEVAKPVEGDMIAQVATVSAGNDPEVGAMISEAMAKVGKDGVITIEESKSLQTEMEIVEGMQFDRGYISPYFVTDPERMIVQLNNAYLLLTDKKITSIQDLIPTLERVARSGRPLVIIAEDVEGEALATLVVNKLRGVLNVVAVKAPAFGERRKAMLQDIAILTGGQVISEEVGLTLEDVELTMLGEASSVTVTKDTTILVSEKGNKADIQKRVEQLKQQLAETDSEYDKEKLQERIAKLVGGVAVIKVGAATETELKDRKLRLEDALNATKAAVAEGIVPGGGVTLLHLASRIDALLPSLSPEEQTGARIVASALAAPVAQIADNAGAEGAVVVENVRAGDFNYGFNAATGAYEDLVSAGIIDPAKVVRSALQNAGSIAGMVLTTEALVVEKPEPKPAAPANGGMGGMGGMM.

Residues 29–32, 86–90, glycine 413, 478–480, and aspartate 494 each bind ATP; these read TLGP, DGTTT, and NAA.

Belongs to the chaperonin (HSP60) family. In terms of assembly, forms a cylinder of 14 subunits composed of two heptameric rings stacked back-to-back. Interacts with the co-chaperonin GroES.

Its subcellular location is the cytoplasm. It catalyses the reaction ATP + H2O + a folded polypeptide = ADP + phosphate + an unfolded polypeptide.. Its function is as follows. Together with its co-chaperonin GroES, plays an essential role in assisting protein folding. The GroEL-GroES system forms a nano-cage that allows encapsulation of the non-native substrate proteins and provides a physical environment optimized to promote and accelerate protein folding. The protein is Chaperonin GroEL 2 of Thermosynechococcus vestitus (strain NIES-2133 / IAM M-273 / BP-1).